The following is a 234-amino-acid chain: Large ribosomal subunit protein uL1 (234 aa).

Belongs to the universal ribosomal protein uL1 family. In terms of assembly, part of the 50S ribosomal subunit.

Binds directly to 23S rRNA. The L1 stalk is quite mobile in the ribosome, and is involved in E site tRNA release. Its function is as follows. Protein L1 is also a translational repressor protein, it controls the translation of the L11 operon by binding to its mRNA. In Serratia proteamaculans (strain 568), this protein is Large ribosomal subunit protein uL1.